Here is a 150-residue protein sequence, read N- to C-terminus: FAD synthase (150 aa).

ATP contacts are provided by residues 11–12, 16–19, Asp-96, and Tyr-124; these read TF and HPGH.

The protein belongs to the archaeal FAD synthase family. Homodimer. A divalent metal cation serves as cofactor.

It carries out the reaction FMN + ATP + H(+) = FAD + diphosphate. The protein operates within cofactor biosynthesis; FAD biosynthesis; FAD from FMN: step 1/1. Its function is as follows. Catalyzes the transfer of the AMP portion of ATP to flavin mononucleotide (FMN) to produce flavin adenine dinucleotide (FAD) coenzyme. The protein is FAD synthase of Methanococcus maripaludis (strain C5 / ATCC BAA-1333).